The sequence spans 198 residues: Sporulation-specific protein 16 (198 aa).

In terms of biological role, necessary for efficient spore formation. This is Sporulation-specific protein 16 (SPO16) from Saccharomyces cerevisiae (strain ATCC 204508 / S288c) (Baker's yeast).